A 193-amino-acid chain; its full sequence is Acyl carrier protein phosphodiesterase (193 aa).

The protein belongs to the AcpH family.

It catalyses the reaction holo-[ACP] + H2O = apo-[ACP] + (R)-4'-phosphopantetheine + H(+). Its function is as follows. Converts holo-ACP to apo-ACP by hydrolytic cleavage of the phosphopantetheine prosthetic group from ACP. In Yersinia enterocolitica serotype O:8 / biotype 1B (strain NCTC 13174 / 8081), this protein is Acyl carrier protein phosphodiesterase.